The sequence spans 343 residues: RNA-binding protein 43 (343 aa).

The region spanning 15–90 (RTVVVSGLPV…PRLTVSHFSE (76 aa)) is the RRM domain.

The chain is RNA-binding protein 43 (Rbm43) from Mus musculus (Mouse).